We begin with the raw amino-acid sequence, 81 residues long: Sulfur carrier protein TusA (81 aa).

Cys-19 acts as the Cysteine persulfide intermediate in catalysis.

This sequence belongs to the sulfur carrier protein TusA family.

It localises to the cytoplasm. In terms of biological role, sulfur carrier protein which probably makes part of a sulfur-relay system. This chain is Sulfur carrier protein TusA, found in Shewanella oneidensis (strain ATCC 700550 / JCM 31522 / CIP 106686 / LMG 19005 / NCIMB 14063 / MR-1).